A 369-amino-acid chain; its full sequence is Methionine import ATP-binding protein MetN (369 aa).

One can recognise an ABC transporter domain in the interval 31-266 (VEMKDVRRMF…PQSPVTQSML (236 aa)). 63-70 (GRSGAGKS) lines the ATP pocket.

It belongs to the ABC transporter superfamily. Methionine importer (TC 3.A.1.24) family. In terms of assembly, the complex is composed of two ATP-binding proteins (MetN), two transmembrane proteins (MetI) and a solute-binding protein (MetQ).

It is found in the cell inner membrane. The enzyme catalyses L-methionine(out) + ATP + H2O = L-methionine(in) + ADP + phosphate + H(+). The catalysed reaction is D-methionine(out) + ATP + H2O = D-methionine(in) + ADP + phosphate + H(+). Part of the ABC transporter complex MetNIQ involved in methionine import. Responsible for energy coupling to the transport system. This Brucella abortus (strain 2308) protein is Methionine import ATP-binding protein MetN.